The chain runs to 434 residues: MALFPLHHEVPCKGEVLFDSNGLRRFSSGLKHRTMAEATTLGRDCRMKSYMKSIPYCRSPRRRLCLVRASSENKITKQRLKLLDSYFGKLQNDDEKPSISTGDDIDRKAELNVNEELDSLSAYLDKLQKDAKSKGLVSSTLDVVKSEGGSVASKLRKTGIENNNSPFQQFDDEDQAEDTLNFYAVSILASINVGVCLFEAAAPVRNNNMGLLSLPLLYGAKINDLILAGEWWRLVTPMFLHSGIPHVALSSWALLTFGPKVCRDYGLFTFCLIYILGGVSGNFMSFLHTADPTVGGTGPAFALIGAWLVDQNQNKEMIKSNEYEDLFQKAIIMTGFGLILSHFGPIDDWTNLGALIAGIVYGFFTCPVLQLGSGGSERQEGIVTVGPEKQNSADPCKSFLLFTIFVAVIVTSLLLIGDGPLDFPTYDDVVYSLI.

The transit peptide at 1–68 (MALFPLHHEV…SPRRRLCLVR (68 aa)) directs the protein to the chloroplast. 8 helical membrane-spanning segments follow: residues 182 to 202 (FYAVSILASINVGVCLFEAAA), 209 to 229 (MGLLSLPLLYGAKINDLILAG), 238 to 258 (MFLHSGIPHVALSSWALLTFG), 267 to 287 (LFTFCLIYILGGVSGNFMSFL), 289 to 309 (TADPTVGGTGPAFALIGAWLV), 326 to 346 (LFQKAIIMTGFGLILSHFGPI), 352 to 372 (LGALIAGIVYGFFTCPVLQLG), and 399 to 419 (FLLFTIFVAVIVTSLLLIGDG).

Belongs to the peptidase S54 family.

The protein resides in the plastid. It localises to the chloroplast membrane. Probable rhomboid-type serine protease that catalyzes intramembrane proteolysis. In Arabidopsis thaliana (Mouse-ear cress), this protein is RHOMBOID-like protein 9, chloroplastic.